Here is a 211-residue protein sequence, read N- to C-terminus: Thiamine-phosphate synthase (211 aa).

4-amino-2-methyl-5-(diphosphooxymethyl)pyrimidine contacts are provided by residues glutamine 37 to lysine 41 and asparagine 69. 2 residues coordinate Mg(2+): aspartate 70 and aspartate 89. Residue serine 108 coordinates 4-amino-2-methyl-5-(diphosphooxymethyl)pyrimidine. 2-[(2R,5Z)-2-carboxy-4-methylthiazol-5(2H)-ylidene]ethyl phosphate is bound at residue threonine 134–threonine 136. Lysine 137 is a 4-amino-2-methyl-5-(diphosphooxymethyl)pyrimidine binding site. 2-[(2R,5Z)-2-carboxy-4-methylthiazol-5(2H)-ylidene]ethyl phosphate contacts are provided by residues glycine 166 and valine 186–serine 187.

Belongs to the thiamine-phosphate synthase family. It depends on Mg(2+) as a cofactor.

It carries out the reaction 2-[(2R,5Z)-2-carboxy-4-methylthiazol-5(2H)-ylidene]ethyl phosphate + 4-amino-2-methyl-5-(diphosphooxymethyl)pyrimidine + 2 H(+) = thiamine phosphate + CO2 + diphosphate. The catalysed reaction is 2-(2-carboxy-4-methylthiazol-5-yl)ethyl phosphate + 4-amino-2-methyl-5-(diphosphooxymethyl)pyrimidine + 2 H(+) = thiamine phosphate + CO2 + diphosphate. The enzyme catalyses 4-methyl-5-(2-phosphooxyethyl)-thiazole + 4-amino-2-methyl-5-(diphosphooxymethyl)pyrimidine + H(+) = thiamine phosphate + diphosphate. The protein operates within cofactor biosynthesis; thiamine diphosphate biosynthesis; thiamine phosphate from 4-amino-2-methyl-5-diphosphomethylpyrimidine and 4-methyl-5-(2-phosphoethyl)-thiazole: step 1/1. Functionally, condenses 4-methyl-5-(beta-hydroxyethyl)thiazole monophosphate (THZ-P) and 2-methyl-4-amino-5-hydroxymethyl pyrimidine pyrophosphate (HMP-PP) to form thiamine monophosphate (TMP). The polypeptide is Thiamine-phosphate synthase (Escherichia coli O1:K1 / APEC).